Reading from the N-terminus, the 547-residue chain is Chaperonin GroEL (547 aa).

ATP-binding positions include 30–33, Lys51, 87–91, Gly415, and Asp496; these read TLGP and DGTTT. The interval 525–547 is disordered; the sequence is KPEPKSPAGGPGMGGMGGMDGMM. Gly residues predominate over residues 533–547; that stretch reads GGPGMGGMGGMDGMM.

Belongs to the chaperonin (HSP60) family. As to quaternary structure, forms a cylinder of 14 subunits composed of two heptameric rings stacked back-to-back. Interacts with the co-chaperonin GroES.

The protein localises to the cytoplasm. It carries out the reaction ATP + H2O + a folded polypeptide = ADP + phosphate + an unfolded polypeptide.. Functionally, together with its co-chaperonin GroES, plays an essential role in assisting protein folding. The GroEL-GroES system forms a nano-cage that allows encapsulation of the non-native substrate proteins and provides a physical environment optimized to promote and accelerate protein folding. This is Chaperonin GroEL from Cereibacter sphaeroides (strain ATCC 17029 / ATH 2.4.9) (Rhodobacter sphaeroides).